The following is a 767-amino-acid chain: Tetratricopeptide repeat protein 16 (767 aa).

TPR repeat units follow at residues 18–51 (VREY…DPKL), 53–85 (DFYV…DPGN), 93–126 (AFVL…QPQN), 128–155 (SFSY…REVK), 208–241 (AKQS…NPLD), 242–275 (PNFF…VTDT), 288–321 (LLTY…EQNE), 322–355 (KGLY…SPLD), and 363–396 (GVLQ…SPQK). A disordered region spans residues 612–733 (EVTPAYGQRD…DSLSFSEISS (122 aa)). Residues 684 to 718 (QRSSQKVTKTPSLTHSTTHSDIGESANDTPGQTPW) are compositionally biased toward polar residues.

In Mus musculus (Mouse), this protein is Tetratricopeptide repeat protein 16 (Ttc16).